Consider the following 632-residue polypeptide: 2-hydroxyacyl-CoA lyase 2 (632 aa).

Residues 13 to 33 (LFPSFLLLACGTLVAALLGAA) form a helical membrane-spanning segment. Glu98 provides a ligand contact to thiamine diphosphate. Residues 470–550 (DFVGTAAHLV…VMALVGNDAG (81 aa)) form a thiamine pyrophosphate binding region. Mg(2+) contacts are provided by Asp521 and Asn547.

It belongs to the TPP enzyme family. The cofactor is Mg(2+). It depends on thiamine diphosphate as a cofactor. In terms of tissue distribution, expressed in all tissues tested, with highest expression in heart, pancreas and placenta.

The protein localises to the endoplasmic reticulum membrane. The catalysed reaction is 2-hydroxyoctadecanoyl-CoA = heptadecanal + formyl-CoA. The enzyme catalyses (2R)-hydroxyhexadecanoyl-CoA = pentadecanal + formyl-CoA. In terms of biological role, endoplasmic reticulum 2-OH acyl-CoA lyase involved in the cleavage (C1 removal) reaction in the fatty acid alpha-oxydation in a thiamine pyrophosphate (TPP)-dependent manner. Involved in the phytosphingosine degradation pathway. In Homo sapiens (Human), this protein is 2-hydroxyacyl-CoA lyase 2.